A 492-amino-acid chain; its full sequence is BTB/POZ domain and ankyrin repeat-containing protein NOOT2 (492 aa).

A BTB domain is found at 25 to 107 (SDVTFQVEGR…LYSGQVSIVP (83 aa)). Residues 113 to 127 (RPNCGERGCWHTHCT) form a C2HC NPR-type zinc finger. Positions 116, 121, 123, and 126 each coordinate Zn(2+). ANK repeat units lie at residues 248-277 (QKIRRMRRALDSSDVELVKLMVMGEGLNLD), 278-307 (EALALHYAVENCSREVVKALLELGAADVNY), 312-341 (AGKTSLHVAAEMVSPEMVAVLLDHHADPTV), and 345-379 (DGVTPLDILRTLTSDFLFKGAVPGLNHIEPNKLRL). Disordered stretches follow at residues 395 to 439 (ENNA…NSIG) and 455 to 492 (TQMGGDDDNRHNNSHREAMNRQGGHGCDPSMYHHSHDF). 2 stretches are compositionally biased toward low complexity: residues 397–413 (NASNNNNNNNNASSSAA) and 425–439 (SSSSGNNNNNNNSIG). Residues 461–473 (DDNRHNNSHREAM) are compositionally biased toward basic and acidic residues.

Belongs to the plant 'ANKYRIN-BTB/POZ' family. 'NOOT-BOP-COCH-like' (NBCL) subfamily. As to quaternary structure, homodimer.

It localises to the nucleus. The protein resides in the cytoplasm. The protein localises to the cell membrane. Its pathway is protein modification; protein ubiquitination. In terms of biological role, may act as a substrate-specific adapter of an E3 ubiquitin-protein ligase complex (CUL3-RBX1-BTB) which mediates the ubiquitination and subsequent proteasomal degradation of target proteins. Transcriptional co-regulator involved in the promotion of leaf and floral meristem fate and determinacy. Required for the abscission of senescent organs, probably by regulating the cell wall disorganization in abscission zones (AZs, e.g. pulvini at the base of leaves). Involved in the coordination of the symbiotic nodule developmental program; promotes the formation of root nodules by interacting directly with APP1 to modulate the expression of the nuclear transcription factor Y subunit (NF-YA1), a key nodulin. Involved in the regulation of indeterminate nodule identity in association with NOOT1. This chain is BTB/POZ domain and ankyrin repeat-containing protein NOOT2, found in Medicago truncatula (Barrel medic).